A 25-amino-acid chain; its full sequence is Kappa-conotoxin RIIIJ (25 aa).

Residues proline 2, proline 3, proline 7, proline 8, proline 13, proline 15, and proline 21 each carry the 4-hydroxyproline modification. Intrachain disulfides connect cysteine 4–cysteine 17, cysteine 5–cysteine 22, and cysteine 12–cysteine 23.

It belongs to the conotoxin M superfamily. As to expression, expressed by the venom duct.

It is found in the secreted. In terms of biological role, kappa-conotoxins inhibits voltage-gated potassium channels. This toxin dose-dependently and reversibly inhibits the Kv1.2/KCNA2 channel in mammalia. Does not exert protective effect on cardiac tissue when administered after an ischemic event. The polypeptide is Kappa-conotoxin RIIIJ (Conus radiatus (Rayed cone)).